A 433-amino-acid polypeptide reads, in one-letter code: Enolase (433 aa).

Q167 contributes to the (2R)-2-phosphoglycerate binding site. The Proton donor role is filled by E209. 3 residues coordinate Mg(2+): D246, E291, and D318. Residues K343, R372, S373, and K394 each contribute to the (2R)-2-phosphoglycerate site. The Proton acceptor role is filled by K343.

It belongs to the enolase family. As to quaternary structure, component of the RNA degradosome, a multiprotein complex involved in RNA processing and mRNA degradation. It depends on Mg(2+) as a cofactor.

The protein localises to the cytoplasm. It is found in the secreted. It localises to the cell surface. The enzyme catalyses (2R)-2-phosphoglycerate = phosphoenolpyruvate + H2O. It functions in the pathway carbohydrate degradation; glycolysis; pyruvate from D-glyceraldehyde 3-phosphate: step 4/5. Functionally, catalyzes the reversible conversion of 2-phosphoglycerate (2-PG) into phosphoenolpyruvate (PEP). It is essential for the degradation of carbohydrates via glycolysis. The polypeptide is Enolase (Aeromonas hydrophila subsp. hydrophila (strain ATCC 7966 / DSM 30187 / BCRC 13018 / CCUG 14551 / JCM 1027 / KCTC 2358 / NCIMB 9240 / NCTC 8049)).